Consider the following 306-residue polypeptide: Extensin (306 aa).

Residues 1–32 (MGRIARGSKMSSLIVSLLVVLVSLNLASETTA) form the signal peptide. Residues 33–306 (KYTYSSPPPP…YTSPPPPHHY (274 aa)) form a disordered region. 4 stretches are compositionally biased toward pro residues: residues 38–122 (SPPP…PKHS), 133–152 (SPPPPTPVYKYKSPPPPKHS), 183–214 (SPPPPTPVYKYKSPPPPTPVYKYKSPPPPKHS), and 225–290 (SPPP…SPPP).

In terms of processing, hydroxylated on proline residues in the S-P-P-P-P repeat. Post-translationally, O-glycosylated on hydroxyprolines.

The protein localises to the secreted. Its subcellular location is the primary cell wall. Its function is as follows. Structural component in primary cell wall. This chain is Extensin, found in Daucus carota (Wild carrot).